Here is a 56-residue protein sequence, read N- to C-terminus: Large ribosomal subunit protein bL33 (56 aa).

Residues 1 to 12 show a composition bias toward basic and acidic residues; that stretch reads MATKGGRDKIKL. A disordered region spans residues 1-24; the sequence is MATKGGRDKIKLESTAGTGHFYTT. Over residues 15–24 the composition is skewed to polar residues; that stretch reads TAGTGHFYTT.

Belongs to the bacterial ribosomal protein bL33 family.

The sequence is that of Large ribosomal subunit protein bL33 from Paracidovorax citrulli (strain AAC00-1) (Acidovorax citrulli).